Consider the following 69-residue polypeptide: Small, acid-soluble spore protein I (69 aa).

The protein belongs to the SspI family.

Its subcellular location is the spore core. The sequence is that of Small, acid-soluble spore protein I from Bacillus mycoides (strain KBAB4) (Bacillus weihenstephanensis).